A 610-amino-acid chain; its full sequence is MDLEKLKNHQKYIRNFSIVAHIDHGKSTLADRILELTDTISKRDMQDQVLDDMDLERERGITIKLNAVELTYHAKDGHDYEFHLIDTPGHVDFSYEVSRSLAACEGAVLVVDAAQGVEAQTLANVYLALDDDLEIVPVINKIDLPAADPDKVKNEIEEVIGLDASDAVLASAKQGIGIPELLEQIVTKIPAPAGDLAAPLKALVFDSVYDDYRGVVLSIRLFEGTVKPGDKIRLMNSGSEYEVTEVGVNSPKPIARDYLIAGDVGYITASIKDITDTRVGDTVTSADQPADKALPGYREMSPMVYAGLYPTDNAKLNDLREALEKLQLNDAALEFEPESSQALGFGFRCGFLGMLHMDVIQERLEREFNLDLITTAPSVTYHAYLTDGTMKEVENPAEMPEASAIKRIEEPIVKATIMAPNDYVGAVMDLCQHRRGQFLTMEYLDDYRVNIIYNMPLSEIIFDFFDKLKSNTRGYASLDYEMNGYQGADLVKIDILLNGDKVDALSFIAHRTFAPARGREIASRLKKIIPRQNFEIPVQAAIGAKIIARTTIKAYRKDVTAHLYGGDRTRRMKLLEKQKAGKKRMKAVGKVDIPQEAFMAVLQTDEDETK.

The region spanning Lys-11–Ala-193 is the tr-type G domain. Residues Asp-23–Thr-28 and Asn-140–Asp-143 each bind GTP.

Belongs to the TRAFAC class translation factor GTPase superfamily. Classic translation factor GTPase family. LepA subfamily.

The protein resides in the cell membrane. It carries out the reaction GTP + H2O = GDP + phosphate + H(+). Required for accurate and efficient protein synthesis under certain stress conditions. May act as a fidelity factor of the translation reaction, by catalyzing a one-codon backward translocation of tRNAs on improperly translocated ribosomes. Back-translocation proceeds from a post-translocation (POST) complex to a pre-translocation (PRE) complex, thus giving elongation factor G a second chance to translocate the tRNAs correctly. Binds to ribosomes in a GTP-dependent manner. The sequence is that of Elongation factor 4 from Levilactobacillus brevis (strain ATCC 367 / BCRC 12310 / CIP 105137 / JCM 1170 / LMG 11437 / NCIMB 947 / NCTC 947) (Lactobacillus brevis).